A 268-amino-acid polypeptide reads, in one-letter code: Undecaprenyl-diphosphatase (268 aa).

7 consecutive transmembrane segments (helical) span residues 5 to 25 (SIIS…IPVS), 43 to 63 (GNTF…LVYF), 84 to 104 (FSVL…HGFI), 107 to 127 (VLFE…IILY), 184 to 204 (AAEF…ALDL), 213 to 233 (FDDV…GIFV), and 248 to 268 (PFAI…WLLG).

This sequence belongs to the UppP family.

It localises to the cell inner membrane. It carries out the reaction di-trans,octa-cis-undecaprenyl diphosphate + H2O = di-trans,octa-cis-undecaprenyl phosphate + phosphate + H(+). In terms of biological role, catalyzes the dephosphorylation of undecaprenyl diphosphate (UPP). Confers resistance to bacitracin. This chain is Undecaprenyl-diphosphatase, found in Rhizobium meliloti (strain 1021) (Ensifer meliloti).